The chain runs to 874 residues: Probable inorganic carbon transporter subunit DabA (874 aa).

C398, D400, H580, and C595 together coordinate Zn(2+).

The protein belongs to the inorganic carbon transporter (TC 9.A.2) DabA family. Forms a complex with DabB. It depends on Zn(2+) as a cofactor.

It is found in the cell membrane. Functionally, part of an energy-coupled inorganic carbon pump. The sequence is that of Probable inorganic carbon transporter subunit DabA from Bacillus thuringiensis subsp. konkukian (strain 97-27).